Reading from the N-terminus, the 92-residue chain is Small ribosomal subunit protein uS19c (92 aa).

Residues 73-92 are disordered; that stretch reads EFSPTRTYRGHAKKDKKAKR. A compositionally biased stretch (basic residues) spans 80–92; the sequence is YRGHAKKDKKAKR.

It belongs to the universal ribosomal protein uS19 family.

It is found in the plastid. The protein resides in the chloroplast. Its function is as follows. Protein S19 forms a complex with S13 that binds strongly to the 16S ribosomal RNA. In Chlamydomonas reinhardtii (Chlamydomonas smithii), this protein is Small ribosomal subunit protein uS19c (rps19).